We begin with the raw amino-acid sequence, 417 residues long: Tyrosine--tRNA ligase (417 aa).

An L-tyrosine-binding site is contributed by Tyr-39. The 'HIGH' region signature appears at 44-53 (PTAASLHAGG). L-tyrosine-binding residues include Tyr-176 and Gln-180. The short motif at 236–240 (KMGKS) is the 'KMSKS' region element. Lys-239 provides a ligand contact to ATP. Residues 350-417 (LGLLTLLVRA…KKKHLLVRPV (68 aa)) form the S4 RNA-binding domain.

The protein belongs to the class-I aminoacyl-tRNA synthetase family. TyrS type 1 subfamily. Homodimer.

Its subcellular location is the cytoplasm. The catalysed reaction is tRNA(Tyr) + L-tyrosine + ATP = L-tyrosyl-tRNA(Tyr) + AMP + diphosphate + H(+). Functionally, catalyzes the attachment of tyrosine to tRNA(Tyr) in a two-step reaction: tyrosine is first activated by ATP to form Tyr-AMP and then transferred to the acceptor end of tRNA(Tyr). This Rhizobium meliloti (strain 1021) (Ensifer meliloti) protein is Tyrosine--tRNA ligase.